The chain runs to 154 residues: Protein X (154 aa).

Positions 68-117 (PCALRFTSARRMETTVNTHMILPKVLHKRTLGLPAMSTIDLEAYFKDCLF) are mitochondrial targeting sequence.

Belongs to the orthohepadnavirus protein X family. In terms of assembly, may form homodimer. May interact with host CEBPA, CFLAR, CREB1, DDB1, E4F1, HBXIP, HSPD1/HSP60, NFKBIA, POLR2E and SMAD4. Interacts with host SMC5-SMC6 complex and induces its degradation. Interacts with host TRPC4AP; leading to prevent ubiquitination of TRPC4AP. Interacts with host PLSCR1; this interaction promotes ubiquitination and degradation of HBx and impairs HBx-mediated cell proliferation. A fraction may be phosphorylated in insect cells and HepG2 cells, a human hepatoblastoma cell line. Phosphorylated in vitro by host protein kinase C or mitogen-activated protein kinase. N-acetylated in insect cells.

The protein localises to the host cytoplasm. Its subcellular location is the host nucleus. It is found in the host mitochondrion. In terms of biological role, multifunctional protein that plays a role in silencing host antiviral defenses and promoting viral transcription. Does not seem to be essential for HBV infection. May be directly involved in development of cirrhosis and liver cancer (hepatocellular carcinoma). Most of cytosolic activities involve modulation of cytosolic calcium. The effect on apoptosis is controversial depending on the cell types in which the studies have been conducted. May induce apoptosis by localizing in mitochondria and causing loss of mitochondrial membrane potential. May also modulate apoptosis by binding host CFLAR, a key regulator of the death-inducing signaling complex (DISC). Promotes viral transcription by using the host E3 ubiquitin ligase DDB1 to target the SMC5-SMC6 complex to proteasomal degradation. This host complex would otherwise bind to viral episomal DNA, and prevents its transcription. Moderately stimulates transcription of many different viral and cellular transcription elements. Promoters and enhancers stimulated by HBx contain DNA binding sites for NF-kappa-B, AP-1, AP-2, c-EBP, ATF/CREB, or the calcium-activated factor NF-AT. This chain is Protein X, found in Hepatitis B virus genotype C subtype ayw (isolate Australia/AustRC/1992) (HBV-C).